Here is a 1322-residue protein sequence, read N- to C-terminus: Structural polyprotein (1322 aa).

2 disordered regions span residues 18–41 (FAPASRGQVQPYRPRTKRRQEPQV) and 61–128 (AGLA…RISV). Positions 48 to 81 (ALANQMSALQLQVAGLAGQARVDRRGPRRVQKNK) are host transcription inhibition. Basic residues predominate over residues 73–86 (GPRRVQKNKQKKKN). A Nuclear localization signal motif is present at residues 74–120 (PRRVQKNKQKKKNSSNGEKPKEKKKKQKQQEKKGSGGEKAKKPRNRP). Basic and acidic residues predominate over residues 101 to 113 (KQQEKKGSGGEKA). Positions 101-135 (KQQEKKGSGGEKAKKPRNRPGKEVRISVKRARQST) are binding to the viral RNA. The segment at 120–134 (PGKEVRISVKRARQS) is ribosome-binding. One can recognise a Peptidase S3 domain in the interval 134–283 (STFPVYHDGA…EIAYSEAIPW (150 aa)). His-160 acts as the Charge relay system in catalysis. The Nuclear export signal signature appears at 165-175 (FDHPELADIKF). Residue Asp-182 is the Charge relay system of the active site. Residues 203–213 (MDGVYNGEYGN) are dimerization of the capsid protein. Residue Ser-234 is the Charge relay system of the active site. Residues 240–244 (DNSGK) form a dimerization of the capsid protein region. The functions as an uncleaved signal peptide for the precursor of protein E3/E2 stretch occupies residues 284 to 303 (TRAPALLLLPMVIACTYNSN). 5 disulfides stabilise this stretch: Cys-298-Cys-307, Cys-382-Cys-488, Cys-385-Cys-390, Cys-455-Cys-469, and Cys-517-Cys-634. Residues 355–735 (AVSTSPVAVY…VHHIKHHPEY (381 aa)) lie on the Extracellular side of the membrane. The chain crosses the membrane as a helical span at residues 736–756 (AWAFVGVACGLLAVAACMFAC). The Cytoplasmic segment spans residues 757–792 (ACNRVRYSLLANTFNPNPPPLTALTAALCCIPGARA). The transient transmembrane before p62-6K protein processing stretch occupies residues 761 to 785 (VRYSLLANTFNPNPPPLTALTAALC). 2 S-palmitoyl cysteine; by host lipidation sites follow: Cys-785 and Cys-786. Topologically, residues 793 to 808 (DQPYLDIIAYLWTNSK) are extracellular. The chain crosses the membrane as a helical span at residues 809–829 (VAFGLQCAAPVACMLIVTYAL). Topologically, residues 830–834 (RHCRL) are cytoplasmic. The chain crosses the membrane as a helical span at residues 835 to 855 (CCNSFLGVRGWSALLVILAYV). At 856 to 1287 (QSCKAYEHTV…YISGPAMRWA (432 aa)) the chain is on the extracellular side. 8 disulfides stabilise this stretch: Cys-910/Cys-985, Cys-923/Cys-965, Cys-924/Cys-967, Cys-929/Cys-949, Cys-1135/Cys-1147, Cys-1177/Cys-1253, Cys-1182/Cys-1257, and Cys-1204/Cys-1247. The interval 955–972 (VYPLLWGAAHCFCSTENT) is E1 fusion peptide loop. A helical transmembrane segment spans residues 1288–1309 (GRIVGNPSGPVSSSLAVTYCVV). The Cytoplasmic segment spans residues 1310-1322 (KKCRSKRIRIVKS). Cys-1312 carries S-stearoyl cysteine; by host lipidation.

In terms of assembly, homodimer. Homomultimer. Interacts with host karyopherin KPNA4; this interaction allows the nuclear import of the viral capsid protein. Interacts with spike glycoprotein E2. Interacts with host IRAK1; the interaction leads to inhibition of IRAK1-dependent signaling. The precursor of protein E3/E2 and E1 form a heterodimer shortly after synthesis. As to quaternary structure, interacts with spike glycoprotein E2. The precursor of protein E3/E2 and E1 form a heterodimer shortly after synthesis. Processing of the precursor of protein E3/E2 into E2 and E3 results in a heterodimer of the spike glycoproteins E2 and E1. Spike at virion surface are constituted of three E2-E1 heterodimers. After target cell attachment and endocytosis, E1 change conformation to form homotrimers. Interacts with 6K protein. In terms of assembly, interacts with spike glycoprotein E1. Processing of the precursor of protein E3/E2 into E2 and E3 results in a heterodimer of the spike glycoproteins E2 and E1. Spike at virion surface are constituted of a trimer of E2-E1 heterodimers. Interacts with 6K protein. Oligomer. Interacts with spike glycoprotein E1. Interacts with spike glycoprotein E2. In terms of processing, structural polyprotein: Specific enzymatic cleavages in vivo yield mature proteins. Capsid protein is auto-cleaved during polyprotein translation, unmasking a signal peptide at the N-terminus of the precursor of E3/E2. The remaining polyprotein is then targeted to the host endoplasmic reticulum, where host signal peptidase cleaves it into pE2, 6K and E1 proteins. pE2 is further processed to mature E3 and E2 by host furin in trans-Golgi vesicle. Palmitoylated via thioester bonds. These palmitoylations may induce disruption of the C-terminus transmembrane. This would result in the reorientation of E2 C-terminus from lumenal to cytoplasmic side. Post-translationally, N-glycosylated. In terms of processing, palmitoylated via thioester bonds.

Its subcellular location is the virion. The protein resides in the host cytoplasm. It is found in the host cell membrane. The protein localises to the host nucleus. It localises to the virion membrane. Its subcellular location is the host Golgi apparatus. The protein resides in the host trans-Golgi network. It is found in the host endoplasmic reticulum. It catalyses the reaction Autocatalytic release of the core protein from the N-terminus of the togavirus structural polyprotein by hydrolysis of a -Trp-|-Ser- bond.. In terms of biological role, forms an icosahedral capsid with a T=4 symmetry composed of 240 copies of the capsid protein surrounded by a lipid membrane through which penetrate 80 spikes composed of trimers of E1-E2 heterodimers. The capsid protein binds to the viral RNA genome at a site adjacent to a ribosome binding site for viral genome translation following genome release. Possesses a protease activity that results in its autocatalytic cleavage from the nascent structural protein. Following its self-cleavage, the capsid protein transiently associates with ribosomes, and within several minutes the protein binds to viral RNA and rapidly assembles into icosahedric core particles. The resulting nucleocapsid eventually associates with the cytoplasmic domain of the spike glycoprotein E2 at the cell membrane, leading to budding and formation of mature virions. In case of infection, new virions attach to target cells and after clathrin-mediated endocytosis their membrane fuses with the host endosomal membrane. This leads to the release of the nucleocapsid into the cytoplasm, followed by an uncoating event necessary for the genomic RNA to become accessible. The uncoating might be triggered by the interaction of capsid proteins with ribosomes. Binding of ribosomes would release the genomic RNA since the same region is genomic RNA-binding and ribosome-binding. Specifically inhibits interleukin-1 receptor-associated kinase 1/IRAK1-dependent signaling during viral entry, representing a means by which the alphaviruses may evade innate immune detection and activation prior to viral gene expression. Its function is as follows. Provides the signal sequence for the translocation of the precursor of protein E3/E2 to the host endoplasmic reticulum. Furin-cleaved E3 remains associated with spike glycoprotein E1 and mediates pH protection of the latter during the transport via the secretory pathway. After virion release from the host cell, the assembly protein E3 is gradually released in the extracellular space. Functionally, plays a role in viral attachment to target host cell, by binding to the cell receptor. Synthesized as a p62 precursor which is processed by furin at the cell membrane just before virion budding, giving rise to E2-E1 heterodimer. The p62-E1 heterodimer is stable, whereas E2-E1 is unstable and dissociate at low pH. p62 is processed at the last step, presumably to avoid E1 fusion activation before its final export to cell surface. E2 C-terminus contains a transitory transmembrane that would be disrupted by palmitoylation, resulting in reorientation of the C-terminal tail from lumenal to cytoplasmic side. This step is critical since E2 C-terminus is involved in budding by interacting with capsid proteins. This release of E2 C-terminus in cytoplasm occurs lately in protein export, and precludes premature assembly of particles at the endoplasmic reticulum membrane. Acts as a viroporin that participates in virus glycoprotein processing and transport to the plasma membrane, cell permeabilization and budding of viral particles. Disrupts the calcium homeostasis of the cell, probably at the endoplasmic reticulum level. This leads to cytoplasmic calcium elevation. Because of its lipophilic properties, the 6K protein is postulated to influence the selection of lipids that interact with the transmembrane domains of the glycoproteins, which, in turn, affects the deformability of the bilayer required for the extreme curvature that occurs as budding proceeds. Present in low amount in virions, about 3% compared to viral glycoproteins. In terms of biological role, class II viral fusion protein. Fusion activity is inactive as long as E1 is bound to E2 in mature virion. After virus attachment to target cell and endocytosis, acidification of the endosome induce dissociation of E1/E2 heterodimer and concomitant trimerization of the E1 subunits. This E1 trimer is fusion active, and promotes release of viral nucleocapsid in cytoplasm after endosome and viral membrane fusion. Efficient fusion requires the presence of cholesterol and sphingolipid in the target membrane. The sequence is that of Structural polyprotein from Oncorhynchus mykiss (Rainbow trout).